Here is a 207-residue protein sequence, read N- to C-terminus: Dephospho-CoA kinase (207 aa).

One can recognise a DPCK domain in the interval 10–207; it reads ILGLTGGIGS…FYLTLRGGQS (198 aa). Residue 18 to 23 coordinates ATP; it reads GSGKSA.

It belongs to the CoaE family.

Its subcellular location is the cytoplasm. It carries out the reaction 3'-dephospho-CoA + ATP = ADP + CoA + H(+). It participates in cofactor biosynthesis; coenzyme A biosynthesis; CoA from (R)-pantothenate: step 5/5. Functionally, catalyzes the phosphorylation of the 3'-hydroxyl group of dephosphocoenzyme A to form coenzyme A. The chain is Dephospho-CoA kinase from Pseudomonas syringae pv. tomato (strain ATCC BAA-871 / DC3000).